We begin with the raw amino-acid sequence, 154 residues long: Ribonuclease H (154 aa).

Residues 1–141 (MKRIEAYTDG…ADELAREGME (141 aa)) form the RNase H type-1 domain. Mg(2+) contacts are provided by Asp9, Glu47, Asp69, and Asp133.

This sequence belongs to the RNase H family. Monomer. It depends on Mg(2+) as a cofactor.

Its subcellular location is the cytoplasm. It catalyses the reaction Endonucleolytic cleavage to 5'-phosphomonoester.. In terms of biological role, endonuclease that specifically degrades the RNA of RNA-DNA hybrids. The chain is Ribonuclease H from Brucella anthropi (strain ATCC 49188 / DSM 6882 / CCUG 24695 / JCM 21032 / LMG 3331 / NBRC 15819 / NCTC 12168 / Alc 37) (Ochrobactrum anthropi).